Here is a 291-residue protein sequence, read N- to C-terminus: DNA N6-methyl adenine demethylase (291 aa).

In terms of domain architecture, Fe2OG dioxygenase spans 85–256; the sequence is GLTLIHNFLS…RGRRIALTMR (172 aa). Residue 171 to 173 coordinates 2-oxoglutarate; that stretch reads LEY. Fe cation is bound by residues His-184, Asp-186, and His-239.

It belongs to the alkB family. Interacts with top-2; the interaction is required for localization of top-2 to DNA. Also interacts with mtss-1, his-24, ule-3, C18B2.3, pgl-1, ceh-93, mcm-4 and F37C4.5. Fe(2+) serves as cofactor.

It is found in the nucleus. The enzyme catalyses an N(6)-methyl-2'-deoxyadenosine in DNA + 2-oxoglutarate + O2 = a 2'-deoxyadenosine in DNA + formaldehyde + succinate + CO2. In terms of biological role, dioxygenase that specifically demethylates DNA methylated on the 6th position of adenine (N(6)-methyladenosine) DNA. N(6)-methyladenosine (m6A) DNA is involved in epigenetic transgenerational inheritance. Plays an essential role in DNA replication and repair in the germline during meiosis. Binds to components of the DNA replication machinery such as top-2, and directs their localization to DNA to control DNA replication. In Caenorhabditis elegans, this protein is DNA N6-methyl adenine demethylase.